The following is a 167-amino-acid chain: Crossover junction endodeoxyribonuclease RuvC (167 aa).

Catalysis depends on residues D11, E71, and D143. Positions 11, 71, and 143 each coordinate Mg(2+).

This sequence belongs to the RuvC family. In terms of assembly, homodimer which binds Holliday junction (HJ) DNA. The HJ becomes 2-fold symmetrical on binding to RuvC with unstacked arms; it has a different conformation from HJ DNA in complex with RuvA. In the full resolvosome a probable DNA-RuvA(4)-RuvB(12)-RuvC(2) complex forms which resolves the HJ. Mg(2+) serves as cofactor.

The protein resides in the cytoplasm. The catalysed reaction is Endonucleolytic cleavage at a junction such as a reciprocal single-stranded crossover between two homologous DNA duplexes (Holliday junction).. Functionally, the RuvA-RuvB-RuvC complex processes Holliday junction (HJ) DNA during genetic recombination and DNA repair. Endonuclease that resolves HJ intermediates. Cleaves cruciform DNA by making single-stranded nicks across the HJ at symmetrical positions within the homologous arms, yielding a 5'-phosphate and a 3'-hydroxyl group; requires a central core of homology in the junction. The consensus cleavage sequence is 5'-(A/T)TT(C/G)-3'. Cleavage occurs on the 3'-side of the TT dinucleotide at the point of strand exchange. HJ branch migration catalyzed by RuvA-RuvB allows RuvC to scan DNA until it finds its consensus sequence, where it cleaves and resolves the cruciform DNA. In Acidiphilium cryptum (strain JF-5), this protein is Crossover junction endodeoxyribonuclease RuvC.